Reading from the N-terminus, the 340-residue chain is MGGGVSVELPKRDPPPGVPTDEMLLNVDKMHDVIAPAKLLEYVHIGPLTKDKEDKVKKRYPEFRLVNTGPGGLSALLRQSYNGTAPNCCRTFNRTHYWKKDGKISDKYEEGAVLESCWPDVHDTGKCDVDLFDWCQGDTFDMNICHQWIGSAFNRSDRTVEGRQSLINLYNKMQRLCSKDASVPICELFLHHLRAHNTEDSKEMIDYILRQQSADFKQKYMRCSYPTRDKLEESLKYAEPRECWDPECSNANVNFLLTRNYNNLGLCNIVRCNTSVNNLQMDKTSSLRLSCGLSNSDRFSTVPVNRAKVVQHNIKHSFDLKLHLISLLSLLVIWILIVAI.

The tract at residues 1–20 is disordered; the sequence is MGGGVSVELPKRDPPPGVPT. The N-myristoyl glycine; by host moiety is linked to residue glycine 2. The Virion surface portion of the chain corresponds to 2–319; it reads GGGVSVELPK…VQHNIKHSFD (318 aa). The chain crosses the membrane as a helical; Signal-anchor for type II membrane protein span at residues 320–340; the sequence is LKLHLISLLSLLVIWILIVAI.

This sequence belongs to the orthopoxvirus OPG086 family. Interacts with OPG143. Component of the entry fusion complex (EFC) composed of OPG053, OPG076, OPG086, OPG094, OPG095, OPG099, OPG107, OPG143, OPG104, OPG147 and OPG155. Except for OPG095 and OPG053, each of the EFC proteins is required for assembly or stability of the complex. In terms of processing, unglycosylated because produced in viral factories instead of the classic ER -Golgi route.

Its subcellular location is the virion membrane. Component of the entry fusion complex (EFC), which consists of 11 proteins. During cell infection, this complex mediates entry of the virion core into the host cytoplasm by a two-step mechanism consisting of lipid mixing of the viral and cellular membranes and subsequent pore formation. This chain is Entry-fusion complex protein OPG094 (OPG094), found in Cynomys gunnisoni (Gunnison's prairie dog).